A 197-amino-acid polypeptide reads, in one-letter code: Holliday junction branch migration complex subunit RuvA (197 aa).

A domain I region spans residues 1–63 (MYDYIKGNLT…EDAHLLYGFH (63 aa)). The interval 64-142 (TEDEKAVFLN…DINEVSTDKS (79 aa)) is domain II. The interval 143–147 (KVSTI) is flexible linker. Residues 148 to 197 (NNNQELEEAVEALLALGYKTNELKKIEKFFEGTTDTAENYIKSALKMLMK) are domain III.

Belongs to the RuvA family. In terms of assembly, homotetramer. Forms an RuvA(8)-RuvB(12)-Holliday junction (HJ) complex. HJ DNA is sandwiched between 2 RuvA tetramers; dsDNA enters through RuvA and exits via RuvB. An RuvB hexamer assembles on each DNA strand where it exits the tetramer. Each RuvB hexamer is contacted by two RuvA subunits (via domain III) on 2 adjacent RuvB subunits; this complex drives branch migration. In the full resolvosome a probable DNA-RuvA(4)-RuvB(12)-RuvC(2) complex forms which resolves the HJ.

The protein resides in the cytoplasm. Its function is as follows. The RuvA-RuvB-RuvC complex processes Holliday junction (HJ) DNA during genetic recombination and DNA repair, while the RuvA-RuvB complex plays an important role in the rescue of blocked DNA replication forks via replication fork reversal (RFR). RuvA specifically binds to HJ cruciform DNA, conferring on it an open structure. The RuvB hexamer acts as an ATP-dependent pump, pulling dsDNA into and through the RuvAB complex. HJ branch migration allows RuvC to scan DNA until it finds its consensus sequence, where it cleaves and resolves the cruciform DNA. This Streptococcus mutans serotype c (strain ATCC 700610 / UA159) protein is Holliday junction branch migration complex subunit RuvA.